The primary structure comprises 889 residues: MKNPFAHLAEPLDPAQPGKKFFNLNKLEDSRYGRLPFSIRVLLEAAVRNCDEFLVKKNDIENILNWSIMQHKSIEVPFKPARVILQDFTGVPAVVDFAAMRDAVKKLGGNPEKINPVCPADLVIDHSIQVHFNRRADSLQKNQDLEFERNRERFEFLKWGSQAFCNMRIIPPGSGIIHQVNLEYLARVVFDQDGCYYPDSLVGTDSHTTMIDGLGVLGWGVGGIEAEAVMLGQPISMVLPQVIGYKLMGKPHPLVTSTDIVLTITKHLRQVGVVGKFVEFFGPGVAQLSIADRATIANMCPEYGATAAFFPVDDVSIAYLVQTGREEDKVKHIKRYLQAVGMFRDFSDSSQDPDFTQVVELDLKTVVPCCSGPKRPQDKVAVSEIEKDFESCLGAKQGFKGFQVAPDHHNDHKTFIYNDSEFTLAHGSVVIAAITSCTNTSNPSVMLGAGLLAKKAVEAGLNVKPYVKTSLSPGSGVVTYYLRESGVMPYLSQLGFDVVGYGCMTCIGNSGPLPEPVVEAITQGDLVAVGVLSGNRNFEGRVHPNTRANYLASPPLVIAYAIAGTVRIDFEKEPLGVNAQGQQVFLKDIWPTRDEIQEVERKYVIPGMFKEVYQKIETVNKSWNALAAPSEKLYAWNPKSTYIKSPPFFESLTLDLQPPKSIVDAYVLLNLGDSVTTDHISPAGNIARNSPAARYLTNRGLTPRDFNSYGSRRGNDAIMARGTFANIRLLNKFLNKQAPQTVHLPSGETLDVFDAAERYQQAGLPLIVLAGKEYGSGSSRDWAAKGPFLLGIKAVLAESYERTHCSNLVGMGVIPLEYLPGETADSLGLTGRERYTIHIPEHLKPRMKVQIKLDTGKTFQAVMRFDTDVELTYFHNGGILNYMIRKMAQ.

Substrate contacts are provided by residues glutamine 86 and 205–207; that span reads DSH. The [4Fe-4S] cluster site is built by cysteine 437, cysteine 503, and cysteine 506. Residues arginine 536, arginine 541, arginine 699, and 779-780 each bind substrate; that span reads SR.

This sequence belongs to the aconitase/IPM isomerase family. As to quaternary structure, interacts (when associated with the 4Fe-4S) with FBXL5. Interacts with frataxin(81-210). Requires [4Fe-4S] cluster as cofactor.

It is found in the cytoplasm. The protein localises to the cytosol. The enzyme catalyses citrate = D-threo-isocitrate. Bifunctional iron sensor that switches between 2 activities depending on iron availability. Iron deprivation, promotes its mRNA binding activity through which it regulates the expression of genes involved in iron uptake, sequestration and utilization. Binds to iron-responsive elements (IRES) in the untranslated region of target mRNAs preventing for instance the translation of ferritin and aminolevulinic acid synthase and stabilizing the transferrin receptor mRNA. Functionally, conversely, when cellular iron levels are high, binds a 4Fe-4S cluster which precludes RNA binding activity and promotes the aconitase activity, the isomerization of citrate to isocitrate via cis-aconitate. In Rattus norvegicus (Rat), this protein is Cytoplasmic aconitate hydratase (Aco1).